The sequence spans 263 residues: Tryptophan 2,3-dioxygenase (263 aa).

Substrate contacts are provided by residues 32–36 (FIVIH), Y94, and R98. Residue H221 participates in heme binding. Substrate is bound at residue T235.

It belongs to the tryptophan 2,3-dioxygenase family. In terms of assembly, homotetramer. Heme serves as cofactor.

It carries out the reaction L-tryptophan + O2 = N-formyl-L-kynurenine. It functions in the pathway amino-acid degradation; L-tryptophan degradation via kynurenine pathway; L-kynurenine from L-tryptophan: step 1/2. Its function is as follows. Heme-dependent dioxygenase that catalyzes the oxidative cleavage of the L-tryptophan (L-Trp) pyrrole ring and converts L-tryptophan to N-formyl-L-kynurenine. Catalyzes the oxidative cleavage of the indole moiety. The polypeptide is Tryptophan 2,3-dioxygenase (Caulobacter vibrioides (strain ATCC 19089 / CIP 103742 / CB 15) (Caulobacter crescentus)).